A 424-amino-acid polypeptide reads, in one-letter code: MLARKSIIPEEYVLARIAAENLRKPRIRDRLPKARFIAKSGACNLAHKNIREQGRFLQDIFTTLVDLKWRHTLVIFTMSFLCSWLLFAIMWWLVAFAHGDIYAYMEKSGMEKSGLESTVCVTNVRSFTSAFLFSIEVQVTIGFGGRMMTEECPLAITVLILQNIVGLIINAVMLGCIFMKTAQAHRRAETLIFSRHAVIAVRNGKLCFMFRVGDLRKSMIISASVRIQVVKKTTTPEGEVVPIHQLDIPVDNPIESNNIFLVAPLIICHVIDKRSPLYDISATDLANQDLEVIVILEGVVETTGITTQARTSYIAEEIQWGHRFVSIVTEEEGVYSVDYSKFGNTVKVAAPRCSARELDEKPSILIQTLQKSELSHQNSLRKRNSMRRNNSMRRNNSIRRNNSSLMVPKVQFMTPEGNQNTSES.

Topologically, residues 1–69 are cytoplasmic; the sequence is MLARKSIIPE…IFTTLVDLKW (69 aa). Ser-6 bears the Phosphoserine mark. Residues 70 to 94 traverse the membrane as a helical segment; sequence RHTLVIFTMSFLCSWLLFAIMWWLV. Over 95–126 the chain is Extracellular; the sequence is AFAHGDIYAYMEKSGMEKSGLESTVCVTNVRS. The helical; Pore-forming intramembrane region spans 127-138; sequence FTSAFLFSIEVQ. The pore-forming intramembrane region spans 139 to 145; sequence VTIGFGG. Residues 140-145 carry the Selectivity filter motif; sequence TIGFGG. Over 146-154 the chain is Extracellular; that stretch reads RMMTEECPL. A helical membrane pass occupies residues 155–176; sequence AITVLILQNIVGLIINAVMLGC. Residues 177 to 424 lie on the Cytoplasmic side of the membrane; sequence IFMKTAQAHR…PEGNQNTSES (248 aa). Residues 375-424 are disordered; sequence SHQNSLRKRNSMRRNNSMRRNNSIRRNNSSLMVPKVQFMTPEGNQNTSES. Over residues 387-404 the composition is skewed to low complexity; the sequence is RRNNSMRRNNSIRRNNSS.

This sequence belongs to the inward rectifier-type potassium channel (TC 1.A.2.1) family. KCNJ8 subfamily. In terms of assembly, interacts with ABCC9. In terms of tissue distribution, predominantly detected in fetal and adult heart.

Its subcellular location is the membrane. It catalyses the reaction K(+)(in) = K(+)(out). Inward rectifier potassium channels are characterized by a greater tendency to allow potassium to flow into the cell rather than out of it. Their voltage dependence is regulated by the concentration of extracellular potassium; as external potassium is raised, the voltage range of the channel opening shifts to more positive voltages. The inward rectification is mainly due to the blockage of outward current by internal magnesium. This channel is activated by internal ATP and can be blocked by external barium. Can form a sulfonylurea-sensitive but ATP-insensitive potassium channel with ABCC9. This Homo sapiens (Human) protein is ATP-sensitive inward rectifier potassium channel 8 (KCNJ8).